A 419-amino-acid polypeptide reads, in one-letter code: L-rhamnose isomerase (419 aa).

Residues histidine 262, aspartate 294, and aspartate 296 each coordinate Mn(2+).

This sequence belongs to the rhamnose isomerase family. Homotetramer. It depends on Mn(2+) as a cofactor.

Its subcellular location is the cytoplasm. The enzyme catalyses L-rhamnopyranose = L-rhamnulose. It functions in the pathway carbohydrate degradation; L-rhamnose degradation; glycerone phosphate from L-rhamnose: step 1/3. In terms of biological role, catalyzes the interconversion of L-rhamnose and L-rhamnulose. The sequence is that of L-rhamnose isomerase from Escherichia coli O9:H4 (strain HS).